The chain runs to 76 residues: Kappa-actitoxin-Avd4n (76 aa).

An N-terminal signal peptide occupies residues 1–19; it reads MNKAFFLCLVVLCAAVVFA. Residues 20-31 constitute a propeptide that is removed on maturation; that stretch reads AEDLQKGKHAPF. Intrachain disulfides connect cysteine 37–cysteine 72 and cysteine 39–cysteine 65.

This sequence belongs to the sea anemone type 3 (BDS) potassium channel toxin family. Lacks the conventional Cys residue at position 55. Thus, only 2 disulfide are possible present. Experimental results show no expression in the ectodermal tissue from the distal and proximal tentacles, body wall, and oral disk. Since paralogs are expressed in this tissue, an expression of this toxin in this tissue is probable. The negative results could be explained by the very low abundance of EST sequences.

It localises to the secreted. The protein localises to the nematocyst. Functionally, blocks Kv3 voltage-gated potassium channels. Reduces blood pressure. This Anemonia viridis (Snakelocks anemone) protein is Kappa-actitoxin-Avd4n.